The chain runs to 376 residues: Ribonucleoside-diphosphate reductase 1 subunit beta (376 aa).

Positions 85, 116, and 119 each coordinate Fe cation. Residue tyrosine 123 is part of the active site. Fe cation contacts are provided by glutamate 205, glutamate 239, and histidine 242.

It belongs to the ribonucleoside diphosphate reductase small chain family. As to quaternary structure, tetramer of two alpha (R1) and two beta (R2) subunits. The B1 protein is a dimer of alpha subunits. A radical transfer pathway occurs between Tyr-123 of R2 and R1. Requires Fe cation as cofactor.

The enzyme catalyses a 2'-deoxyribonucleoside 5'-diphosphate + [thioredoxin]-disulfide + H2O = a ribonucleoside 5'-diphosphate + [thioredoxin]-dithiol. In terms of biological role, provides the precursors necessary for DNA synthesis. Catalyzes the biosynthesis of deoxyribonucleotides from the corresponding ribonucleotides. R2 contains the tyrosyl radical required for catalysis. The chain is Ribonucleoside-diphosphate reductase 1 subunit beta (nrdB) from Salmonella typhimurium (strain LT2 / SGSC1412 / ATCC 700720).